The chain runs to 115 residues: MNLMLTLFINTSLASVLVLIAFWLPQLNIYTEKASPYECGFDPMGSARLPFTMKFFLVAITFLLFDLEIALLLPLPWASQTTNLKTMLTMALILISLLAASLAYEWTQKGLEWAE.

The next 3 membrane-spanning stretches (helical) occupy residues Leu-3–Trp-23, Phe-55–Leu-75, and Thr-86–Trp-106.

Belongs to the complex I subunit 3 family. As to quaternary structure, core subunit of respiratory chain NADH dehydrogenase (Complex I) which is composed of 45 different subunits. Interacts with TMEM186. Interacts with TMEM242.

Its subcellular location is the mitochondrion inner membrane. It catalyses the reaction a ubiquinone + NADH + 5 H(+)(in) = a ubiquinol + NAD(+) + 4 H(+)(out). In terms of biological role, core subunit of the mitochondrial membrane respiratory chain NADH dehydrogenase (Complex I) which catalyzes electron transfer from NADH through the respiratory chain, using ubiquinone as an electron acceptor. Essential for the catalytic activity of complex I. This chain is NADH-ubiquinone oxidoreductase chain 3, found in Ceratotherium simum (White rhinoceros).